Here is a 465-residue protein sequence, read N- to C-terminus: Auxin transporter-like protein 3 (465 aa).

Over 1 to 52 the chain is Cytoplasmic; it reads MTSEKVETVVAGNYLEMEREEEGSKSTTGKLSKFFWHGGSVYDAWFSCASNQ. Residues 53–70 form a helical membrane-spanning segment; that stretch reads VAQVLLTLPYSFSQLGML. At 71-72 the chain is on the extracellular side; the sequence is SG. The helical transmembrane segment at 73-93 threads the bilayer; that stretch reads ILFQIFYGLMGSWTAYIISVL. Topologically, residues 94–129 are cytoplasmic; that stretch reads YVEYRTRKEREKVDFRNHVIQWFEVLDGLLGKHWRN. The helical transmembrane segment at 130-150 threads the bilayer; the sequence is LGLFFNCTFLLFGSVIQLIAC. The Extracellular portion of the chain corresponds to 151 to 165; sequence ASNIYYINDHLDKRT. The chain crosses the membrane as a helical span at residues 166–186; that stretch reads WTYIFGACCATTVFIPSFHNY. Residues 187-189 lie on the Cytoplasmic side of the membrane; sequence RIW. A helical membrane pass occupies residues 190–210; the sequence is SFLGLVMTTYTAWYMTIASIL. Topologically, residues 211-225 are extracellular; sequence HGQAEDVKHSGPTKL. The chain crosses the membrane as a helical span at residues 226–246; sequence VLYFTGATNILYTFGGHAVTV. The Cytoplasmic segment spans residues 247–259; it reads EIMHAMWKPQKFK. A helical transmembrane segment spans residues 260–280; it reads MIYLIATLYVMTLTLPSAAAV. Residues 281-307 are Extracellular-facing; that stretch reads YWAFGDNLLTHSNALSLLPRTGFRDTA. A helical membrane pass occupies residues 308 to 328; that stretch reads VILMLIHQFITFGFACTPLYF. The Cytoplasmic portion of the chain corresponds to 329 to 349; it reads VWEKFLGVHETKSLLKRALVR. A helical transmembrane segment spans residues 350 to 370; the sequence is LPVVIPIWFLAIIFPFFGPIN. The Extracellular segment spans residues 371 to 374; sequence STVG. Residues 375–395 traverse the membrane as a helical segment; the sequence is SLLVSFTVYIIPALAHMVTFA. At 396–421 the chain is on the cytoplasmic side; it reads SAPARENAVERPPSFLGGWVGLYSVN. Residues 422–442 traverse the membrane as a helical segment; sequence VFVAVWVLVVGFGLGGWASML. Topologically, residues 443–465 are extracellular; that stretch reads NFVHQIKTFGLFAKCFQCPPHKA.

The protein belongs to the amino acid/polyamine transporter 2 family. Amino acid/auxin permease (AAAP) (TC 2.A.18.1) subfamily. As to expression, shoots and roots of nodulating plants. Low levels in roots, nodules, stems, petioles, leaves, shoot apices and flowers.

Its subcellular location is the cell membrane. Carrier protein involved in proton-driven auxin influx. Mediates the formation of auxin gradient from developing leaves (site of auxin biosynthesis) to tips by contributing to the loading of auxin in vascular tissues and facilitating acropetal (base to tip) auxin transport within inner tissues of the root apex, and basipetal (tip to base) auxin transport within outer tissues of the root apex. May be involved in lateral roots and nodules formation. This Medicago truncatula (Barrel medic) protein is Auxin transporter-like protein 3 (LAX3).